Reading from the N-terminus, the 361-residue chain is Protein YIM1-2 (361 aa).

It belongs to the YIM1 family.

It localises to the lipid droplet. It is found in the mitochondrion. The chain is Protein YIM1-2 (YIM1-2) from Lachancea thermotolerans (strain ATCC 56472 / CBS 6340 / NRRL Y-8284) (Yeast).